Reading from the N-terminus, the 178-residue chain is Peptidyl-prolyl cis-trans isomerase (178 aa).

The first 17 residues, 1-17 (MKLLFFFLVLAVSAAVA), serve as a signal peptide directing secretion. Positions 26-177 (FMDIEIDGES…KIAKITDIGL (152 aa)) constitute a PPIase cyclophilin-type domain.

The protein belongs to the cyclophilin-type PPIase family. PPIase A subfamily.

The catalysed reaction is [protein]-peptidylproline (omega=180) = [protein]-peptidylproline (omega=0). In terms of biological role, PPIases accelerate the folding of proteins. It catalyzes the cis-trans isomerization of proline imidic peptide bonds in oligopeptides. Up-regulates interferon gamma production by bovine T-cells. Stimulates high levels of IFN-gamma production by peripheral blood mononuclear cells and T-cells. The IFN-gamma-inducing effect is blocked by cyclosporin A (CsA). This chain is Peptidyl-prolyl cis-trans isomerase, found in Neospora caninum (Coccidian parasite).